The chain runs to 355 residues: 1D-myo-inositol 2-acetamido-2-deoxy-alpha-D-glucopyranoside deacetylase 3 (355 aa).

The Zn(2+) site is built by His-31, Asp-34, and His-169.

Belongs to the MshB deacetylase family. It depends on Zn(2+) as a cofactor.

It catalyses the reaction 1D-myo-inositol 2-acetamido-2-deoxy-alpha-D-glucopyranoside + H2O = 1D-myo-inositol 2-amino-2-deoxy-alpha-D-glucopyranoside + acetate. Catalyzes the deacetylation of 1D-myo-inositol 2-acetamido-2-deoxy-alpha-D-glucopyranoside (GlcNAc-Ins) in the mycothiol biosynthesis pathway. This Catenulispora acidiphila (strain DSM 44928 / JCM 14897 / NBRC 102108 / NRRL B-24433 / ID139908) protein is 1D-myo-inositol 2-acetamido-2-deoxy-alpha-D-glucopyranoside deacetylase 3.